We begin with the raw amino-acid sequence, 574 residues long: Developmental and secondary metabolism regulator veA (574 aa).

Disordered regions lie at residues 1–22 (MATRAPLAPPPNETEASVSRIT), 39–60 (ERARACGAGAKSSADRRPVDPP), 255–500 (RSSD…GAGK), and 513–540 (RSYEDSFGHDDRPLYNGMRPDTESYPRR). The region spanning 25–230 (GKKLTYKLNV…AEQGCRVRIR (206 aa)) is the Velvet domain. The short motif at 39–44 (ERARAC) is the Nuclear localization signal element. Composition is skewed to pro residues over residues 314–323 (RPLPPAPGPA) and 330–341 (PAPPAPPAPPSH). Composition is skewed to polar residues over residues 343-353 (PGYQSHLSFGS), 385-394 (HARNPSTSAE), 406-415 (RMSTERSSYP), and 448-458 (VAQSAAPRSQT). A PEST region spans residues 457-498 (QTPSSSLVPSLPPLKALSGDYPNNLSQSSSSTSQSPSHDLGA). Low complexity-rich tracts occupy residues 459–474 (PSSSLVPSLPPLKALS) and 482–493 (SQSSSSTSQSPS). The segment covering 513-525 (RSYEDSFGHDDRP) has biased composition (basic and acidic residues).

This sequence belongs to the velvet family. VeA subfamily. In terms of assembly, component of the heterotrimeric velvet complex composed of laeA, veA and velB; VeA acting as a bridging protein between laeA and velB.

It is found in the nucleus. It localises to the cytoplasm. Functionally, component of the velvet transcription factor complex that controls sexual/asexual developmental ratio in response to light, promoting sexual development in the darkness while stimulating asexual sporulation under illumination. The velvet complex hat acts as a global regulator for secondary metabolite gene expression. Controls the expression of the cyclopiazonic acid, aflatrem, and aflatoxin gene clusters. Controls the expression of the sclerotium-specific pigment asparasone A gene cluster. Controls the expression of the aflavarin gene cluster. also controls the production of hydrolases and other extracellular proteins during growth on natural starch-based substrates. Regulates genes involved in the High Osmolarity Glycerol (HOG) signaling pathway. Required for the conidial and sclerotial density-dependent production. This Aspergillus flavus (strain ATCC 200026 / FGSC A1120 / IAM 13836 / NRRL 3357 / JCM 12722 / SRRC 167) protein is Developmental and secondary metabolism regulator veA.